Reading from the N-terminus, the 243-residue chain is MSMLCYTLIIAFLIGIWAAPKSEDNVPLGSPATSDLSDTSCAQTHEGLKTSRNTDQRHPAPKKAEDQELGSAANIIVDPKLFQKRRFQSPRVLFSTQPPPLSRDEQSVEFLDNEDTLNRNIRAKRETHPVHNLGEYSVCDSISVWVANKTKAMDIKGKPVTVMVDVNLNNHVFKQYFFETKCRNPNPVPSGCRGIDSGHWNSYCTTTQTFVRALTMEGNQASWRFIRIDTACVCVISRKTENF.

Residues 1 to 18 (MSMLCYTLIIAFLIGIWA) form the signal peptide. Residues 19-125 (APKSEDNVPL…TLNRNIRAKR (107 aa)) constitute a propeptide that is removed on maturation. Residues 47–66 (GLKTSRNTDQRHPAPKKAED) show a composition bias toward basic and acidic residues. A disordered region spans residues 47 to 69 (GLKTSRNTDQRHPAPKKAEDQEL). Cystine bridges form between Cys139-Cys204, Cys182-Cys232, and Cys192-Cys234. Asn148 carries N-linked (GlcNAc...) asparagine glycosylation.

The protein belongs to the NGF-beta family. Homodimer; non-covalently linked. As to expression, expressed by the venom gland.

Its subcellular location is the secreted. Nerve growth factor is important for the development and maintenance of the sympathetic and sensory nervous systems. It stimulates division and differentiation of sympathetic and embryonic sensory neurons as well as basal forebrain cholinergic neurons in the brain. Its relevance in the snake venom is not clear. However, it has been shown to inhibit metalloproteinase-dependent proteolysis of platelet glycoprotein Ib alpha, suggesting a metalloproteinase inhibition to prevent metalloprotease autodigestion and/or protection against prey proteases. Binds a lipid between the two protein chains in the homodimer. The lipid-bound form promotes histamine relase from mouse mast cells, contrary to the lipid-free form. In Oxyuranus microlepidotus (Inland taipan), this protein is Venom nerve growth factor 1.